Here is a 199-residue protein sequence, read N- to C-terminus: Adenylyl-sulfate kinase (199 aa).

Residue 31-38 coordinates ATP; the sequence is GLSGSGKS. Ser-105 serves as the catalytic Phosphoserine intermediate.

The protein belongs to the APS kinase family.

The catalysed reaction is adenosine 5'-phosphosulfate + ATP = 3'-phosphoadenylyl sulfate + ADP + H(+). The protein operates within sulfur metabolism; hydrogen sulfide biosynthesis; sulfite from sulfate: step 2/3. In terms of biological role, catalyzes the synthesis of activated sulfate. In Marinobacter nauticus (strain ATCC 700491 / DSM 11845 / VT8) (Marinobacter aquaeolei), this protein is Adenylyl-sulfate kinase.